Consider the following 177-residue polypeptide: Large ribosomal subunit protein uL6 (177 aa).

The protein belongs to the universal ribosomal protein uL6 family. Part of the 50S ribosomal subunit.

Its function is as follows. This protein binds to the 23S rRNA, and is important in its secondary structure. It is located near the subunit interface in the base of the L7/L12 stalk, and near the tRNA binding site of the peptidyltransferase center. This chain is Large ribosomal subunit protein uL6, found in Rickettsia typhi (strain ATCC VR-144 / Wilmington).